The chain runs to 545 residues: Glucans biosynthesis protein G (545 aa).

Residues 1–34 form the signal peptide; it reads MVSLLRCQSFKPSSSLICSLALSAAFALSSSAFA. The disordered stretch occupies residues 38–60; that stretch reads KPAENKPATPVVSPPKATAQPAN.

Belongs to the OpgD/OpgG family.

The protein localises to the periplasm. Its pathway is glycan metabolism; osmoregulated periplasmic glucan (OPG) biosynthesis. Functionally, involved in the biosynthesis of osmoregulated periplasmic glucans (OPGs). In Shewanella sp. (strain MR-7), this protein is Glucans biosynthesis protein G.